Here is a 257-residue protein sequence, read N- to C-terminus: 3-deoxy-manno-octulosonate cytidylyltransferase (257 aa).

Belongs to the KdsB family.

It is found in the cytoplasm. It catalyses the reaction 3-deoxy-alpha-D-manno-oct-2-ulosonate + CTP = CMP-3-deoxy-beta-D-manno-octulosonate + diphosphate. It functions in the pathway nucleotide-sugar biosynthesis; CMP-3-deoxy-D-manno-octulosonate biosynthesis; CMP-3-deoxy-D-manno-octulosonate from 3-deoxy-D-manno-octulosonate and CTP: step 1/1. The protein operates within bacterial outer membrane biogenesis; lipopolysaccharide biosynthesis. Activates KDO (a required 8-carbon sugar) for incorporation into bacterial lipopolysaccharide in Gram-negative bacteria. The chain is 3-deoxy-manno-octulosonate cytidylyltransferase from Xylella fastidiosa (strain M23).